The primary structure comprises 508 residues: CXXC-type zinc finger protein 1 (508 aa).

The CXXC-type zinc finger occupies 10 to 47; sequence EDVWKERCMNCIRCNDEKNCGTCWPCRNGKTCDMRKCF. Disordered stretches follow at residues 95–156 and 453–508; these read QQVE…EPDK and KSQS…TQNN. 2 stretches are compositionally biased toward low complexity: residues 113–123 and 454–481; these read AAAAAQQRKAN and SQST…SSSS.

In terms of assembly, component of the SET2 complex (also known as the SET1/COMPASS complex), which contains at least set-2, swd-2.1, cfp-1, rbbp-5, wdr-5.1, dpy-30 and ash-2. Within the complex, interacts with wdr-5.1, ash-2 and dpy-30. Also interacts with the SIN3S complex, which contains at least sin-3, hda-1, athp-1 and mrg-1. Interacts with sin-3, hda-1 and mrg-1.

The protein resides in the nucleus. Its function is as follows. Transcriptional activator that exhibits a unique DNA binding specificity for CpG motifs; enriched at promoters containing the trimethylation mark on histone H3 'Lys-4' (H3K4me3). Forms part of the SET2 complex and interacts with the SIN3S HDAC complex at promoters. Required for H3K4 trimethylation and plays a repressive role in the expression of heat shock and salt-inducible genes. Required for fertility, in cooperation with class I histone deacetylases (HDACs). The sequence is that of CXXC-type zinc finger protein 1 from Caenorhabditis elegans.